Here is a 143-residue protein sequence, read N- to C-terminus: Ribonuclease HI (143 aa).

Residues 1 to 136 (MQEIEIFCDG…CNSLAKLEAQ (136 aa)) form the RNase H type-1 domain. Residues Asp-9, Glu-47, Asp-69, and Asn-128 each coordinate Mg(2+).

It belongs to the RNase H family. Monomer. Mg(2+) serves as cofactor.

It localises to the cytoplasm. It carries out the reaction Endonucleolytic cleavage to 5'-phosphomonoester.. Its function is as follows. Endonuclease that specifically degrades the RNA of RNA-DNA hybrids. The protein is Ribonuclease HI (rnhA) of Helicobacter pylori (strain J99 / ATCC 700824) (Campylobacter pylori J99).